We begin with the raw amino-acid sequence, 1097 residues long: Platelet-derived growth factor receptor beta (1097 aa).

The first 31 residues, 1 to 31 (MGLPEVMPASVLRGQLLLFVLLLLGPQISQG), serve as a signal peptide directing secretion. Ig-like C2-type domains lie at 32–119 (LVIT…YIFV), 128–209 (PMDS…YSLQ), and 213–308 (INVS…INVT). Topologically, residues 32–531 (LVITPPGPEF…VVPHSLPFKV (500 aa)) are extracellular. N-linked (GlcNAc...) asparagine glycans are attached at residues N44, N88, and N102. C53 and C99 are oxidised to a cystine. Cysteines 148 and 189 form a disulfide. N214 carries an N-linked (GlcNAc...) asparagine glycan. The cysteines at positions 234 and 290 are disulfide-linked. N291, N306, N353, N370, N444, N467, and N478 each carry an N-linked (GlcNAc...) asparagine glycan. Residues 415 to 523 (PVRVLELSES…GRDSQEVTVV (109 aa)) form the Ig-like C2-type 4 domain. C435 and C507 are disulfide-bonded. A helical transmembrane segment spans residues 532-552 (VVISAILALVVLTVISLIILI). The Cytoplasmic segment spans residues 553–1097 (MLWQRKPRYE…PLAEAEDSFL (545 aa)). 3 positions are modified to phosphotyrosine; by autocatalysis: Y561, Y578, and Y580. Residues 599-961 (LVLGRTLGSG…QLVLLLERLL (363 aa)) enclose the Protein kinase domain. ATP-binding positions include 605-613 (LGSGAFGQV) and K633. Y685 bears the Phosphotyrosine; by ABL1 and ABL2 mark. A phosphotyrosine; by autocatalysis mark is found at Y715, Y739, Y750, Y762, Y770, Y774, and Y777. The active-site Proton acceptor is the D825. The residue at position 856 (Y856) is a Phosphotyrosine; by autocatalysis. 2 positions are modified to phosphotyrosine; by ABL1 and ABL2: Y933 and Y969. 2 positions are modified to phosphotyrosine; by autocatalysis: Y1008 and Y1020. The disordered stretch occupies residues 1016-1097 (TDNDYIIPLP…PLAEAEDSFL (82 aa)). Over residues 1042-1059 (SLASSTLNEVNTSSTISC) the composition is skewed to polar residues. Residues 1072–1081 (EPEAQLEQPQ) show a composition bias toward low complexity.

It belongs to the protein kinase superfamily. Tyr protein kinase family. CSF-1/PDGF receptor subfamily. As to quaternary structure, interacts with homodimeric PDGFB and PDGFD, and with heterodimers formed by PDGFA and PDGFB. May also interact with homodimeric PDGFC. Monomer in the absence of bound ligand. Interaction with homodimeric PDGFB, heterodimers formed by PDGFA and PDGFB or homodimeric PDGFD, leads to receptor dimerization, where both PDGFRA homodimers and heterodimers with PDGFRB are observed. Interacts with SH2B2/APS. Interacts directly (tyrosine phosphorylated) with SHB. Interacts (tyrosine phosphorylated) with PIK3R1 and RASA1. Interacts (tyrosine phosphorylated) with CBL. Interacts (tyrosine phosphorylated) with SRC and SRC family kinases. Interacts (tyrosine phosphorylated) with PIK3C2B, maybe indirectly. Interacts (tyrosine phosphorylated) with SHC1, GRB7, GRB10 and NCK1. Interaction with GRB2 is mediated by SHC1. Interacts (via C-terminus) with NHERF1. Post-translationally, N-glycosylated. In terms of processing, ubiquitinated. After autophosphorylation, the receptor is polyubiquitinated, leading to its degradation. Autophosphorylated on tyrosine residues upon ligand binding. Autophosphorylation occurs in trans, i.e. one subunit of the dimeric receptor phosphorylates tyrosine residues on the other subunit. Phosphorylation at Tyr-578, and to a lesser degree, Tyr-580 is important for interaction with SRC. Phosphorylation at Tyr-715 is important for interaction with GRB2. Phosphorylation at Tyr-739 and Tyr-750 is important for interaction with PIK3R1. Phosphorylation at Tyr-750 is important for interaction with NCK1. Phosphorylation at Tyr-770 and Tyr-856 is important for interaction with RASA1/GAP. Phosphorylation at Tyr-856 is important for efficient phosphorylation of PLCG1 and PTPN11, resulting in increased phosphorylation of AKT1, MAPK1/ERK2 and/or MAPK3/ERK1, PDCD6IP/ALIX and STAM, and in increased cell proliferation. Phosphorylation at Tyr-1008 is important for interaction with PTPN11. Phosphorylation at Tyr-1008 and Tyr-1020 is important for interaction with PLCG1. Dephosphorylated by PTPRJ at Tyr-750, Tyr-856, Tyr-1008 and Tyr-1020. Dephosphorylated by PTPN2 at Tyr-578 and Tyr-1020.

Its subcellular location is the cell membrane. The protein localises to the cytoplasmic vesicle. It is found in the lysosome lumen. It catalyses the reaction L-tyrosyl-[protein] + ATP = O-phospho-L-tyrosyl-[protein] + ADP + H(+). Its activity is regulated as follows. Present in an inactive conformation in the absence of bound ligand. Binding of PDGFB and/or PDGFD leads to dimerization and activation by autophosphorylation on tyrosine residues. Its function is as follows. Tyrosine-protein kinase that acts as a cell-surface receptor for homodimeric PDGFB and PDGFD and for heterodimers formed by PDGFA and PDGFB, and plays an essential role in the regulation of embryonic development, cell proliferation, survival, differentiation, chemotaxis and migration. Plays an essential role in blood vessel development by promoting proliferation, migration and recruitment of pericytes and smooth muscle cells to endothelial cells. Plays a role in the migration of vascular smooth muscle cells and the formation of neointima at vascular injury sites. Required for normal development of the cardiovascular system. Required for normal recruitment of pericytes (mesangial cells) in the kidney glomerulus, and for normal formation of a branched network of capillaries in kidney glomeruli. Promotes rearrangement of the actin cytoskeleton and the formation of membrane ruffles. Binding of its cognate ligands - homodimeric PDGFB, heterodimers formed by PDGFA and PDGFB or homodimeric PDGFD -leads to the activation of several signaling cascades; the response depends on the nature of the bound ligand and is modulated by the formation of heterodimers between PDGFRA and PDGFRB. Phosphorylates PLCG1, PIK3R1, PTPN11, RASA1/GAP, CBL, SHC1 and NCK1. Activation of PLCG1 leads to the production of the cellular signaling molecules diacylglycerol and inositol 1,4,5-trisphosphate, mobilization of cytosolic Ca(2+) and the activation of protein kinase C. Phosphorylation of PIK3R1, the regulatory subunit of phosphatidylinositol 3-kinase, leads to the activation of the AKT1 signaling pathway. Phosphorylation of SHC1, or of the C-terminus of PTPN11, creates a binding site for GRB2, resulting in the activation of HRAS, RAF1 and down-stream MAP kinases, including MAPK1/ERK2 and/or MAPK3/ERK1. Promotes phosphorylation and activation of SRC family kinases. Promotes phosphorylation of PDCD6IP/ALIX and STAM. Receptor signaling is down-regulated by protein phosphatases that dephosphorylate the receptor and its down-stream effectors, and by rapid internalization of the activated receptor. In Rattus norvegicus (Rat), this protein is Platelet-derived growth factor receptor beta (Pdgfrb).